A 587-amino-acid polypeptide reads, in one-letter code: tRNA (guanine(37)-N(1))-methyltransferase 2 (587 aa).

Residues Arg-360 and 430–431 (DA) contribute to the S-adenosyl-L-methionine site. The interval 446–469 (ASTRSRKEDVTNKDGNHVTPTEPM) is disordered. Positions 450 to 461 (SRKEDVTNKDGN) are enriched in basic and acidic residues. Asn-478 contributes to the S-adenosyl-L-methionine binding site.

Belongs to the class I-like SAM-binding methyltransferase superfamily. TRM5/TYW2 family. Monomer.

The protein localises to the mitochondrion matrix. It localises to the nucleus. Its subcellular location is the cytoplasm. It carries out the reaction guanosine(37) in tRNA + S-adenosyl-L-methionine = N(1)-methylguanosine(37) in tRNA + S-adenosyl-L-homocysteine + H(+). Its function is as follows. Specifically methylates the N1 position of guanosine-37 in various cytoplasmic and mitochondrial tRNAs. Methylation is not dependent on the nature of the nucleoside 5' of the target nucleoside. This is the first step in the biosynthesis of wybutosine (yW), a modified base adjacent to the anticodon of tRNAs and required for accurate decoding. This chain is tRNA (guanine(37)-N(1))-methyltransferase 2, found in Phaeodactylum tricornutum (strain CCAP 1055/1).